The sequence spans 289 residues: ATP synthase gamma chain (289 aa).

It belongs to the ATPase gamma chain family. F-type ATPases have 2 components, CF(1) - the catalytic core - and CF(0) - the membrane proton channel. CF(1) has five subunits: alpha(3), beta(3), gamma(1), delta(1), epsilon(1). CF(0) has three main subunits: a, b and c.

It is found in the cell inner membrane. In terms of biological role, produces ATP from ADP in the presence of a proton gradient across the membrane. The gamma chain is believed to be important in regulating ATPase activity and the flow of protons through the CF(0) complex. The sequence is that of ATP synthase gamma chain from Azobacteroides pseudotrichonymphae genomovar. CFP2.